The sequence spans 178 residues: ATP-dependent protease subunit HslV (178 aa).

The active site involves Thr7. 3 residues coordinate Na(+): Gly162, Cys165, and Thr168.

This sequence belongs to the peptidase T1B family. HslV subfamily. As to quaternary structure, a double ring-shaped homohexamer of HslV is capped on each side by a ring-shaped HslU homohexamer. The assembly of the HslU/HslV complex is dependent on binding of ATP.

Its subcellular location is the cytoplasm. It catalyses the reaction ATP-dependent cleavage of peptide bonds with broad specificity.. Its activity is regulated as follows. Allosterically activated by HslU binding. Its function is as follows. Protease subunit of a proteasome-like degradation complex believed to be a general protein degrading machinery. The chain is ATP-dependent protease subunit HslV from Sulfurihydrogenibium sp. (strain YO3AOP1).